We begin with the raw amino-acid sequence, 320 residues long: D-amino-acid oxidase (320 aa).

FAD contacts are provided by Gly18, Gly19, Val20, Ile21, Thr47, Thr48, Ser49, Gly53, Gly54, Leu55, Val161, and Thr176. Residues Tyr220 and Arg275 each contribute to the D-proline site. The D-serine site is built by Tyr220 and Arg275. Residues Arg275, Gly301, Gly302, Gly304, and Thr306 each coordinate FAD. Gly302 provides a ligand contact to D-proline. D-serine is bound at residue Gly302.

This sequence belongs to the DAMOX/DASOX family. FAD is required as a cofactor.

The protein localises to the cytoplasm. It localises to the secreted. It is found in the cell wall. The enzyme catalyses a D-alpha-amino acid + O2 + H2O = a 2-oxocarboxylate + H2O2 + NH4(+). It catalyses the reaction D-leucine + O2 + H2O = 4-methyl-2-oxopentanoate + H2O2 + NH4(+). It carries out the reaction D-valine + O2 + H2O = 3-methyl-2-oxobutanoate + H2O2 + NH4(+). The catalysed reaction is D-isoleucine + O2 + H2O = (R)-3-methyl-2-oxopentanoate + H2O2 + NH4(+). The enzyme catalyses D-methionine + O2 + H2O = 4-methylsulfanyl-2-oxobutanoate + H2O2 + NH4(+). Catalyzes the oxidative deamination of D-amino acids with broad substrate specificity. The chain is D-amino-acid oxidase from Streptomyces coelicolor (strain ATCC BAA-471 / A3(2) / M145).